A 251-amino-acid chain; its full sequence is Cytochrome c oxidase subunit 2 (251 aa).

The propeptide at 1-15 (MLDLLRLQLTTFIMN) is removed in mature form. Residues 16–30 (DVPTPYACYFQDSAT) lie on the Mitochondrial intermembrane side of the membrane. A helical membrane pass occupies residues 31–64 (PNQEGILELHDNIMFYLLVILGLVSWMLYTIVMT). At 65 to 78 (YSKNPIAYKYIKHG) the chain is on the mitochondrial matrix side. Residues 79–108 (QTIEVIWTIFPAVILLIIAFPSFILLYLCD) traverse the membrane as a helical segment. Topologically, residues 109-251 (EVISPAMTIK…PKFLEWLNEQ (143 aa)) are mitochondrial intermembrane. Cu cation contacts are provided by H186, C221, E223, C225, H229, and M232. E223 lines the Mg(2+) pocket.

Belongs to the cytochrome c oxidase subunit 2 family. Component of the cytochrome c oxidase (complex IV, CIV), a multisubunit enzyme composed of 12 subunits. The complex is composed of a catalytic core of 3 subunits COX1, COX2 and COX3, encoded in the mitochondrial DNA, and 9 supernumerary subunits COX4, COX5A (or COX5B), COX6, COX7, COX8, COX9, COX12, COX13 and COX26, which are encoded in the nuclear genome. The complex exists as a monomer or a dimer and forms supercomplexes (SCs) in the inner mitochondrial membrane with a dimer of ubiquinol-cytochrome c oxidoreductase (cytochrome b-c1 complex, complex III, CIII), resulting in 2 different assemblies (supercomplexes III(2)IV and III(2)IV(2)). Requires Cu cation as cofactor. In terms of processing, the N-terminal sequence of COX2 is processed by IMP1.

It is found in the mitochondrion inner membrane. The enzyme catalyses 4 Fe(II)-[cytochrome c] + O2 + 8 H(+)(in) = 4 Fe(III)-[cytochrome c] + 2 H2O + 4 H(+)(out). Component of the cytochrome c oxidase, the last enzyme in the mitochondrial electron transport chain which drives oxidative phosphorylation. The respiratory chain contains 3 multisubunit complexes succinate dehydrogenase (complex II, CII), ubiquinol-cytochrome c oxidoreductase (cytochrome b-c1 complex, complex III, CIII) and cytochrome c oxidase (complex IV, CIV), that cooperate to transfer electrons derived from NADH and succinate to molecular oxygen, creating an electrochemical gradient over the inner membrane that drives transmembrane transport and the ATP synthase. Cytochrome c oxidase is the component of the respiratory chain that catalyzes the reduction of oxygen to water. Electrons originating from reduced cytochrome c in the intermembrane space (IMS) are transferred via the dinuclear copper A center (CU(A)) of COX2 and heme A of COX1 to the active site in COX1, a binuclear center (BNC) formed by heme A3 and copper B (CU(B)). The BNC reduces molecular oxygen to 2 water molecules unsing 4 electrons from cytochrome c in the IMS and 4 protons from the mitochondrial matrix. COX2 is a catalytic core subunit which transfers the electrons from cytochrome c via its dinuclear copper A center (CU(A)) to the BNC of the COX1. The sequence is that of Cytochrome c oxidase subunit 2 (COX2) from Saccharomyces cerevisiae (strain ATCC 204508 / S288c) (Baker's yeast).